A 1011-amino-acid chain; its full sequence is Probable beta-galactosidase E (1011 aa).

A signal peptide spans 1–19 (MKSLLKRLIALAAAYSVAA). Substrate is bound by residues Tyr92, Asn136, Ala137, Glu138, and Asn195. Residue Glu196 is the Proton donor of the active site. The N-linked (GlcNAc...) asparagine glycan is linked to Asn202. Tyr261 lines the substrate pocket. A disulfide bridge connects residues Cys267 and Cys316. Glu299 (nucleophile) is an active-site residue. Tyr365 lines the substrate pocket. N-linked (GlcNAc...) asparagine glycans are attached at residues Asn406, Asn423, Asn446, Asn455, Asn588, Asn622, Asn704, Asn745, Asn759, Asn772, Asn778, and Asn913.

This sequence belongs to the glycosyl hydrolase 35 family.

The protein localises to the secreted. The catalysed reaction is Hydrolysis of terminal non-reducing beta-D-galactose residues in beta-D-galactosides.. In terms of biological role, cleaves beta-linked terminal galactosyl residues from gangliosides, glycoproteins, and glycosaminoglycans. The sequence is that of Probable beta-galactosidase E (lacE) from Aspergillus fumigatus (strain CBS 144.89 / FGSC A1163 / CEA10) (Neosartorya fumigata).